We begin with the raw amino-acid sequence, 129 residues long: Small ribosomal subunit protein uS11 (129 aa).

Belongs to the universal ribosomal protein uS11 family. As to quaternary structure, part of the 30S ribosomal subunit. Interacts with proteins S7 and S18. Binds to IF-3.

Its function is as follows. Located on the platform of the 30S subunit, it bridges several disparate RNA helices of the 16S rRNA. Forms part of the Shine-Dalgarno cleft in the 70S ribosome. This is Small ribosomal subunit protein uS11 from Staphylococcus carnosus (strain TM300).